We begin with the raw amino-acid sequence, 57 residues long: TICHIQISKTHGILKTCEENSCYKMSVRGWIIGRGCGCPSAVRPRQVQCCTSDKCNY.

Intrachain disulfides connect Cys-3/Cys-22, Cys-17/Cys-36, Cys-38/Cys-49, and Cys-50/Cys-55.

It belongs to the three-finger toxin family. Short-chain subfamily. As to expression, expressed by the venom gland.

It is found in the secreted. In terms of biological role, when tested on muscarinic GPCR, specifically antagonizes the type 2 receptor (CHRM2) subtype (Ki/Kd=120-399 nM). Ex vivo, it reverses the M2R-agonist-induced relaxation in rat and human arteries. The chain is Dendroaspis polylepis MT9 from Dendroaspis polylepis polylepis (Black mamba).